Consider the following 462-residue polypeptide: Cysteine--tRNA ligase (462 aa).

Cysteine 24 serves as a coordination point for Zn(2+). Residues 26–36 carry the 'HIGH' region motif; the sequence is PTVYDDAHLGH. Cysteine 199, histidine 224, and glutamate 228 together coordinate Zn(2+). The short motif at 256–260 is the 'KMSKS' region element; sequence KMSKS. Lysine 259 contacts ATP.

This sequence belongs to the class-I aminoacyl-tRNA synthetase family. In terms of assembly, monomer. Requires Zn(2+) as cofactor.

The protein localises to the cytoplasm. The enzyme catalyses tRNA(Cys) + L-cysteine + ATP = L-cysteinyl-tRNA(Cys) + AMP + diphosphate. The chain is Cysteine--tRNA ligase from Campylobacter jejuni subsp. jejuni serotype O:23/36 (strain 81-176).